The following is a 712-amino-acid chain: Polyribonucleotide nucleotidyltransferase (712 aa).

Mg(2+) is bound by residues Asp484 and Asp490. The KH domain maps to 550–609 (PKYKTMDVNPEKIRVLIGPGGKNIKAIIEETGSDVEIQDSGVVNIFAPDTPTLDKTIKLI). Residues 619–686 (GEVYDGIVKD…KGGKYSLSRK (68 aa)) enclose the S1 motif domain.

It belongs to the polyribonucleotide nucleotidyltransferase family. Requires Mg(2+) as cofactor.

Its subcellular location is the cytoplasm. It carries out the reaction RNA(n+1) + phosphate = RNA(n) + a ribonucleoside 5'-diphosphate. Involved in mRNA degradation. Catalyzes the phosphorolysis of single-stranded polyribonucleotides processively in the 3'- to 5'-direction. The sequence is that of Polyribonucleotide nucleotidyltransferase from Brachyspira hyodysenteriae (strain ATCC 49526 / WA1).